A 66-amino-acid chain; its full sequence is KDGYLVGNDGCKYSCLTRPGHYCASECSRVKGKDGYCYAWMACYCYSMPDWVKTWSRSTNRCGRGK.

In terms of domain architecture, LCN-type CS-alpha/beta spans 1-63 (KDGYLVGNDG…TWSRSTNRCG (63 aa)). 4 cysteine pairs are disulfide-bonded: C11–C62, C15–C37, C23–C43, and C27–C45.

It belongs to the long (4 C-C) scorpion toxin superfamily. Sodium channel inhibitor family. Beta subfamily. In terms of tissue distribution, expressed by the venom gland.

It is found in the secreted. Functionally, beta toxins bind voltage-independently at site-4 of sodium channels (Nav) and shift the voltage of activation toward more negative potentials thereby affecting sodium channel activation and promoting spontaneous and repetitive firing. This chain is Toxin Tppa1, found in Tityus pachyurus (Colombian scorpion).